Here is a 182-residue protein sequence, read N- to C-terminus: Transcription termination/antitermination protein NusG (182 aa).

The protein belongs to the NusG family.

Participates in transcription elongation, termination and antitermination. The chain is Transcription termination/antitermination protein NusG from Chlamydia trachomatis serovar D (strain ATCC VR-885 / DSM 19411 / UW-3/Cx).